The following is a 354-amino-acid chain: Protein RecA (354 aa).

Gly67–Thr74 serves as a coordination point for ATP.

Belongs to the RecA family.

It localises to the cytoplasm. In terms of biological role, can catalyze the hydrolysis of ATP in the presence of single-stranded DNA, the ATP-dependent uptake of single-stranded DNA by duplex DNA, and the ATP-dependent hybridization of homologous single-stranded DNAs. It interacts with LexA causing its activation and leading to its autocatalytic cleavage. The sequence is that of Protein RecA from Chlamydia muridarum (strain MoPn / Nigg).